A 552-amino-acid polypeptide reads, in one-letter code: Membrane protein insertase YidC (552 aa).

5 consecutive transmembrane segments (helical) span residues 7-24 (VLWV…DNWQ), 364-384 (WGWA…PLSA), 434-454 (LPVV…LASV), 473-493 (PFFI…SLNP), and 508-528 (PIAF…YYVV).

Belongs to the OXA1/ALB3/YidC family. Type 1 subfamily. In terms of assembly, interacts with the Sec translocase complex via SecD. Specifically interacts with transmembrane segments of nascent integral membrane proteins during membrane integration.

The protein resides in the cell inner membrane. In terms of biological role, required for the insertion and/or proper folding and/or complex formation of integral membrane proteins into the membrane. Involved in integration of membrane proteins that insert both dependently and independently of the Sec translocase complex, as well as at least some lipoproteins. Aids folding of multispanning membrane proteins. This chain is Membrane protein insertase YidC, found in Burkholderia cenocepacia (strain HI2424).